The chain runs to 517 residues: Acetylcholine receptor subunit delta (517 aa).

The signal sequence occupies residues 1-21; sequence MAGPVPTLGLLAALVVCGSWG. Residues 22–245 are Extracellular-facing; sequence LNEEQRLIQH…VTFYLIIRRK (224 aa). N-linked (GlcNAc...) asparagine glycans are attached at residues N97, N164, and N190. C151 and C165 are oxidised to a cystine. Helical transmembrane passes span 246 to 270, 278 to 296, and 312 to 333; these read PLFY…VFYL, TSVA…LLIS, and FLLF…VLNI. At 334–471 the chain is on the cytoplasmic side; it reads HFRTPSTHVL…WNQVARTVDR (138 aa). Residue Y390 is modified to Phosphotyrosine; by Tyr-kinases. A helical transmembrane segment spans residues 472-490; sequence LCLFVVTPVMVVGTAWIFL.

The protein belongs to the ligand-gated ion channel (TC 1.A.9) family. Acetylcholine receptor (TC 1.A.9.1) subfamily. Delta/CHRND sub-subfamily. Pentamer of two alpha chains, and one each of the beta, delta, and gamma (in immature muscle) or epsilon (in mature muscle) chains. The muscle heteropentamer composed of alpha-1, beta-1, delta, epsilon subunits interacts with the alpha-conotoxin ImII.

It is found in the postsynaptic cell membrane. The protein localises to the cell membrane. It carries out the reaction K(+)(in) = K(+)(out). It catalyses the reaction Na(+)(in) = Na(+)(out). In terms of biological role, after binding acetylcholine, the AChR responds by an extensive change in conformation that affects all subunits and leads to opening of an ion-conducting channel across the plasma membrane. The sequence is that of Acetylcholine receptor subunit delta (Chrnd) from Rattus norvegicus (Rat).